The sequence spans 275 residues: MPIVRAKPTSPGRRFVEKVVHPHLYKGRPFAALLESKSKTGGRNNNGRITTRHIGGGHKQHYRIIDFKRTKDNIPATVERIEYDPNRTAHIALLKYADGERRYIIAAKKQAVGDTVMSGELSPIRPGNCLPLKNIPLGTVIHNIELKIGKGAQMARAAGASVQLLGRDGIYAILRLRSGETRRVHVNCRAVIGEVSNTENNLKSLGKAGASRWRGIRPSVRGVAMNPVDHPHGGGEGRNKGRHPTSPWGQKSKGLKTRNNKRTDSMIIRRRAKKK.

The segment at 222–275 (GVAMNPVDHPHGGGEGRNKGRHPTSPWGQKSKGLKTRNNKRTDSMIIRRRAKKK) is disordered. Over residues 229–239 (DHPHGGGEGRN) the composition is skewed to basic and acidic residues.

Belongs to the universal ribosomal protein uL2 family. In terms of assembly, part of the 50S ribosomal subunit. Forms a bridge to the 30S subunit in the 70S ribosome.

Its function is as follows. One of the primary rRNA binding proteins. Required for association of the 30S and 50S subunits to form the 70S ribosome, for tRNA binding and peptide bond formation. It has been suggested to have peptidyltransferase activity; this is somewhat controversial. Makes several contacts with the 16S rRNA in the 70S ribosome. This Psychrobacter arcticus (strain DSM 17307 / VKM B-2377 / 273-4) protein is Large ribosomal subunit protein uL2.